The chain runs to 345 residues: KRR1 small subunit processome component homolog (345 aa).

A KH domain is found at 125 to 193 (DIIKIGNLVH…VRDIVLETMN (69 aa)). The span at 232-245 (NISKRKQPKVKKQK) shows a compositional bias: basic residues. Disordered regions lie at residues 232-260 (NISK…ESKV) and 273-345 (QEQK…ARSS). Residues 270–298 (FLNQEQKQAKRNQERTEKQKEAAKRQDER) adopt a coiled-coil conformation. Basic and acidic residues-rich tracts occupy residues 276–302 (KQAK…RNKD) and 315–330 (RKKE…DVKA). The segment covering 331–345 (LKAKLIKANKKARSS) has biased composition (basic residues).

This sequence belongs to the KRR1 family. As to quaternary structure, monomer. Component of the ribosomal small subunit (SSU) processome.

It localises to the nucleus. The protein localises to the nucleolus. In terms of biological role, required for 40S ribosome biogenesis. Involved in nucleolar processing of pre-18S ribosomal RNA and ribosome assembly. Binds to RNA. Required for female germline development, cell viability during eye development and for survival of dividing cells and epithelial cells during early wing disk development. This Drosophila melanogaster (Fruit fly) protein is KRR1 small subunit processome component homolog (dbe).